Consider the following 393-residue polypeptide: Cytochrome b (393 aa).

Transmembrane regions (helical) follow at residues 32-52 (FGSL…TLAM), 76-98 (WLIR…LHMG), 113-133 (VWTL…LGYV), and 179-199 (FFAL…MHLI). Residues His-82 and His-96 each contribute to the heme b site. His-183 and His-197 together coordinate heme b. His-202 contacts a ubiquinone. A run of 4 helical transmembrane segments spans residues 226–246 (FIFK…IFVF), 290–310 (LLGV…PFTD), 322–342 (LSKI…KLGA), and 349–369 (FIEF…IIVP).

This sequence belongs to the cytochrome b family. Fungal cytochrome b-c1 complex contains 10 subunits; 3 respiratory subunits, 2 core proteins and 5 low-molecular weight proteins. Cytochrome b-c1 complex is a homodimer. Heme b is required as a cofactor.

The protein localises to the mitochondrion inner membrane. Component of the ubiquinol-cytochrome c reductase complex (complex III or cytochrome b-c1 complex) that is part of the mitochondrial respiratory chain. The b-c1 complex mediates electron transfer from ubiquinol to cytochrome c. Contributes to the generation of a proton gradient across the mitochondrial membrane that is then used for ATP synthesis. The polypeptide is Cytochrome b (COB) (Venturia inaequalis (Apple scab fungus)).